Consider the following 89-residue polypeptide: MAISKEKKNEIIAQYARHEGDTGSVEVQVAVLTWEINHLNDHIKQHKKDHATYRGLMKKIGHRRNLLAYLRRKDVNRYRELISSLGLRR.

This sequence belongs to the universal ribosomal protein uS15 family. Part of the 30S ribosomal subunit. Forms a bridge to the 50S subunit in the 70S ribosome, contacting the 23S rRNA.

Its function is as follows. One of the primary rRNA binding proteins, it binds directly to 16S rRNA where it helps nucleate assembly of the platform of the 30S subunit by binding and bridging several RNA helices of the 16S rRNA. Functionally, forms an intersubunit bridge (bridge B4) with the 23S rRNA of the 50S subunit in the ribosome. This chain is Small ribosomal subunit protein uS15, found in Streptococcus thermophilus (strain CNRZ 1066).